Consider the following 217-residue polypeptide: NADPH-dependent 3-demethoxyubiquinone 3-hydroxylase, mitochondrial (217 aa).

A mitochondrion-targeting transit peptide spans 1–23 (MSAAGAIAAASVGRLRTGVRRPF). 2 consecutive repeat copies span residues 48 to 129 (AVDR…TALL) and 130 to 217 (GKEG…SERF). The 2 X approximate tandem repeats stretch occupies residues 48 to 217 (AVDRIIRVDH…SAAIYLSERF (170 aa)). Residue arginine 51 participates in NADH binding. Residues glutamate 60, glutamate 90, histidine 93, glutamate 142, glutamate 178, and histidine 181 each coordinate Fe cation. NADH is bound by residues tyrosine 212 and arginine 216.

It belongs to the COQ7 family. Component of a multi-subunit COQ enzyme complex. Interacts with COQ8B and COQ6. Interacts with COQ9. Fe cation is required as a cofactor. In terms of tissue distribution, highly expressed in tissues with high energy demand such as heart, muscle, liver, and kidney.

It localises to the mitochondrion inner membrane. The catalysed reaction is a 5-methoxy-2-methyl-3-(all-trans-polyprenyl)benzoquinone + NADH + O2 = a 3-demethylubiquinone + NAD(+) + H2O. The protein operates within cofactor biosynthesis; ubiquinone biosynthesis. In terms of biological role, catalyzes the hydroxylation of the 5-methoxy-2-methyl-3-(all-trans-polyprenyl)benzoquinone at the C6 position and participates in the biosynthesis of ubiquinone. Catalyzes the reaction through a substrate-mediated reduction pathway, whereby NADH shuttles electrons to 5-methoxy-2-methyl-3-(all-trans-decaprenyl)benzoquinone, which then transfers the electrons to the two Fe(3+) centers. The binding of 5-methoxy-2-methyl-3-(all-trans-polyprenyl)benzoquinone (DMQn) mediates reduction of the diiron center by nicotinamide adenine dinucleotide (NADH) and initiates oxygen activation for subsequent DMQ hydroxylation. The physiological substrates are 5-methoxy-2-methyl-3-(all-trans-nonaprenyl)benzoquinone (DMQ(9)) and 5-methoxy-2-methyl-3-(all-trans-decaprenyl)benzoquinone (DMQ(10)), however in vitro the enzyme does not have any specificity concerning the length of the polyprenyl tail, and accepts tails of various lengths with similar efficiency. Also has a structural role in the COQ enzyme complex, stabilizing other COQ polypeptides. Involved in lifespan determination in a ubiquinone-independent manner. Plays a role in modulating mitochondrial stress responses, acting in the nucleus, perhaps via regulating gene expression, independent of its characterized mitochondrial function in ubiquinone biosynthesis. This is NADPH-dependent 3-demethoxyubiquinone 3-hydroxylase, mitochondrial from Mus musculus (Mouse).